A 152-amino-acid chain; its full sequence is Lipoprotein signal peptidase (152 aa).

The next 2 helical transmembrane spans lie at 55–75 (NKMWFFYIITVVFVGFIVFYM) and 85–105 (LGISLGLILGGAIGNFIDRVF). Catalysis depends on residues aspartate 111 and aspartate 129. The chain crosses the membrane as a helical span at residues 124 to 144 (VFNIADSALCIGVVLIIIQTL).

The protein belongs to the peptidase A8 family.

Its subcellular location is the cell membrane. The enzyme catalyses Release of signal peptides from bacterial membrane prolipoproteins. Hydrolyzes -Xaa-Yaa-Zaa-|-(S,diacylglyceryl)Cys-, in which Xaa is hydrophobic (preferably Leu), and Yaa (Ala or Ser) and Zaa (Gly or Ala) have small, neutral side chains.. Its pathway is protein modification; lipoprotein biosynthesis (signal peptide cleavage). Functionally, this protein specifically catalyzes the removal of signal peptides from prolipoproteins. In Bacillus cytotoxicus (strain DSM 22905 / CIP 110041 / 391-98 / NVH 391-98), this protein is Lipoprotein signal peptidase.